We begin with the raw amino-acid sequence, 437 residues long: Trigger factor (437 aa).

The region spanning 163-248 (GDIAVINFEG…LNQIKAKVLP (86 aa)) is the PPIase FKBP-type domain.

This sequence belongs to the FKBP-type PPIase family. Tig subfamily.

Its subcellular location is the cytoplasm. It carries out the reaction [protein]-peptidylproline (omega=180) = [protein]-peptidylproline (omega=0). Involved in protein export. Acts as a chaperone by maintaining the newly synthesized protein in an open conformation. Functions as a peptidyl-prolyl cis-trans isomerase. This is Trigger factor from Bdellovibrio bacteriovorus (strain ATCC 15356 / DSM 50701 / NCIMB 9529 / HD100).